We begin with the raw amino-acid sequence, 220 residues long: Protein GrpE (220 aa).

It belongs to the GrpE family. As to quaternary structure, homodimer.

Its subcellular location is the cytoplasm. Functionally, participates actively in the response to hyperosmotic and heat shock by preventing the aggregation of stress-denatured proteins, in association with DnaK and GrpE. It is the nucleotide exchange factor for DnaK and may function as a thermosensor. Unfolded proteins bind initially to DnaJ; upon interaction with the DnaJ-bound protein, DnaK hydrolyzes its bound ATP, resulting in the formation of a stable complex. GrpE releases ADP from DnaK; ATP binding to DnaK triggers the release of the substrate protein, thus completing the reaction cycle. Several rounds of ATP-dependent interactions between DnaJ, DnaK and GrpE are required for fully efficient folding. The chain is Protein GrpE from Bartonella quintana (strain Toulouse) (Rochalimaea quintana).